The following is a 752-amino-acid chain: Endo-1,4-beta-xylanase 3 (752 aa).

Positions 1 to 22 are disordered; the sequence is MEKNTNTNHTSDDNNDKNHTNE. Residues 10-22 are compositionally biased toward basic and acidic residues; sequence TSDDNNDKNHTNE. CBM-cenC domains lie at 26-163 and 197-344; these read KIIL…EGPP and NIVE…VQGP. The region spanning 397–692 is the GH10 domain; the sequence is FPYIVKVKQT…NEAGKRFLEV (296 aa). Catalysis depends on Glu526, which acts as the Proton donor. Glu627 acts as the Nucleophile in catalysis.

The protein belongs to the glycosyl hydrolase 10 (cellulase F) family. As to expression, confined to immature xylems.

It carries out the reaction Endohydrolysis of (1-&gt;4)-beta-D-xylosidic linkages in xylans.. It functions in the pathway glycan degradation; xylan degradation. Its function is as follows. Binds to and hydrolyzes insoluble and soluble xylan substrates. In Arabidopsis thaliana (Mouse-ear cress), this protein is Endo-1,4-beta-xylanase 3.